A 1135-amino-acid chain; its full sequence is Nonribosomal peptide synthetase 9 (1135 aa).

A condensation 1 region spans residues 23–77; that stretch reads TKQITTATYIKLAWAVVISCNTGSNDTVFGITVNGRGAPIDGAGEMTGATIATIP. Positions 177–562 are adenylation; the sequence is SYAELIRSAN…RRIDEIQEAT (386 aa). The interval 485 to 507 is disordered; the sequence is GPSPPVGRSSSNRAGSGRCAMGS. The segment covering 491–502 has biased composition (low complexity); that stretch reads GRSSSNRAGSGR. The Carrier domain maps to 672–748; the sequence is APSNRVEQDL…AIANKIGDVQ (77 aa). An O-(pantetheine 4'-phosphoryl)serine modification is found at Ser709. Residues 746–999 are condensation 2; the sequence is DVQRAAIKLV…TTLWPVVAQV (254 aa).

It belongs to the NRP synthetase family.

Its function is as follows. Nonribosomal peptide synthesis (NRPS) is a key mechanism responsible for the biosynthesis of bioactive metabolites which are potentially contributing to organismal virulence. This chain is Nonribosomal peptide synthetase 9 (NRPS9), found in Aspergillus fumigatus (strain ATCC MYA-4609 / CBS 101355 / FGSC A1100 / Af293) (Neosartorya fumigata).